The primary structure comprises 140 residues: ATP synthase epsilon chain 1 (140 aa).

The protein belongs to the ATPase epsilon chain family. F-type ATPases have 2 components, CF(1) - the catalytic core - and CF(0) - the membrane proton channel. CF(1) has five subunits: alpha(3), beta(3), gamma(1), delta(1), epsilon(1). CF(0) has three main subunits: a, b and c.

It localises to the cell inner membrane. Functionally, produces ATP from ADP in the presence of a proton gradient across the membrane. In Photobacterium profundum (strain SS9), this protein is ATP synthase epsilon chain 1.